Reading from the N-terminus, the 513-residue chain is ATP synthase subunit alpha (513 aa).

169–176 (GDRQTGKT) serves as a coordination point for ATP.

It belongs to the ATPase alpha/beta chains family. As to quaternary structure, F-type ATPases have 2 components, CF(1) - the catalytic core - and CF(0) - the membrane proton channel. CF(1) has five subunits: alpha(3), beta(3), gamma(1), delta(1), epsilon(1). CF(0) has three main subunits: a(1), b(2) and c(9-12). The alpha and beta chains form an alternating ring which encloses part of the gamma chain. CF(1) is attached to CF(0) by a central stalk formed by the gamma and epsilon chains, while a peripheral stalk is formed by the delta and b chains.

It is found in the cell inner membrane. The enzyme catalyses ATP + H2O + 4 H(+)(in) = ADP + phosphate + 5 H(+)(out). Produces ATP from ADP in the presence of a proton gradient across the membrane. The alpha chain is a regulatory subunit. The sequence is that of ATP synthase subunit alpha from Histophilus somni (strain 2336) (Haemophilus somnus).